The primary structure comprises 286 residues: Bifunctional protein FolD (286 aa).

NADP(+) contacts are provided by residues 165 to 167 (GRS) and Ser-190.

This sequence belongs to the tetrahydrofolate dehydrogenase/cyclohydrolase family. Homodimer.

The enzyme catalyses (6R)-5,10-methylene-5,6,7,8-tetrahydrofolate + NADP(+) = (6R)-5,10-methenyltetrahydrofolate + NADPH. The catalysed reaction is (6R)-5,10-methenyltetrahydrofolate + H2O = (6R)-10-formyltetrahydrofolate + H(+). It participates in one-carbon metabolism; tetrahydrofolate interconversion. Functionally, catalyzes the oxidation of 5,10-methylenetetrahydrofolate to 5,10-methenyltetrahydrofolate and then the hydrolysis of 5,10-methenyltetrahydrofolate to 10-formyltetrahydrofolate. This is Bifunctional protein FolD from Burkholderia orbicola (strain MC0-3).